The chain runs to 705 residues: p-hydroxybenzoic acid--AMP ligase FadD22 (705 aa).

Residues 541-619 enclose the Carrier domain; that stretch reads ERQRLVVDAV…GLAQYLEAEL (79 aa). Residue Ser-579 is modified to O-(pantetheine 4'-phosphoryl)serine.

This sequence belongs to the ATP-dependent AMP-binding enzyme family.

The catalysed reaction is holo-[4-hydroxyphenylalkanoate synthase] + 4-hydroxybenzoate + ATP = 4-hydroxyphenyl-[4-hydroxyphenylalkanoate synthase] + AMP + diphosphate. It functions in the pathway lipid metabolism; fatty acid biosynthesis. Its function is as follows. Catalyzes the adenylation of p-hydroxybenzoic acid (pHBA) to form p-hydroxybenzoic acid-AMP (pHBA-AMP), which is converted directly to p-hydroxybenzoyl-S-FadD22 (pHBA-S-FAdD22) thioester intermediate in a CoA-independent manner by attack of the phosphopantetheine thiol of FadD22. Usually, this intermediate primes the biosynthesis of the phenolphthiocerol (PPOL) by presenting the pHBA starter unit for elongation by Pks15/1, but M.tuberculosis lacks Pks15/1 due to a natural frameshift and thus is unable to produce PPOL. This chain is p-hydroxybenzoic acid--AMP ligase FadD22 (fadD22), found in Mycobacterium tuberculosis (strain CDC 1551 / Oshkosh).